An 84-amino-acid polypeptide reads, in one-letter code: Acyl carrier protein homolog (84 aa).

The Carrier domain occupies 4–79 (RDILLKIKEI…ELIAEVKHLI (76 aa)). Residue Ser-39 is modified to O-(pantetheine 4'-phosphoryl)serine.

4'-phosphopantetheine is transferred from CoA to a specific serine of the apo-ACP-like protein.

It functions in the pathway lipid metabolism; fatty acid biosynthesis. Its function is as follows. Carrier of the growing fatty acid chain in fatty acid biosynthesis. This Mycoplasma pneumoniae (strain ATCC 29342 / M129 / Subtype 1) (Mycoplasmoides pneumoniae) protein is Acyl carrier protein homolog.